Here is a 281-residue protein sequence, read N- to C-terminus: Nucleotide-binding protein TRQ2_1124 (281 aa).

9–16 (GLSGAGKT) is an ATP binding site. 58–61 (DVRS) is a GTP binding site.

Belongs to the RapZ-like family.

Its function is as follows. Displays ATPase and GTPase activities. This Thermotoga sp. (strain RQ2) protein is Nucleotide-binding protein TRQ2_1124.